An 824-amino-acid chain; its full sequence is Type IV secretion system protein PtlC (824 aa).

456-463 contacts ATP; sequence GQSGSGKT.

This sequence belongs to the TrbE/VirB4 family.

It is found in the cell membrane. Functionally, component of the type IV secretion system ptl essential for secretion of assembled pertussis toxin (PTX) through the outer membrane. This is Type IV secretion system protein PtlC (ptlC) from Bordetella pertussis (strain Tohama I / ATCC BAA-589 / NCTC 13251).